The following is a 197-amino-acid chain: DNA-directed RNA polymerases I, II, and III subunit rpabc1 (197 aa).

The protein belongs to the archaeal Rpo5/eukaryotic RPB5 RNA polymerase subunit family. In terms of assembly, component of the RNA polymerase I (Pol I), RNA polymerase II (Pol II) and RNA polymerase III (Pol III) complexes consisting of at least 13, 12 and 17 subunits, respectively. In RNA Pol II, this subunit is present in 2-fold molar excess over the other subunits.

Its subcellular location is the nucleus. In terms of biological role, DNA-dependent RNA polymerase catalyzes the transcription of DNA into RNA using the four ribonucleoside triphosphates as substrates. Common component of RNA polymerases I, II and III which synthesize ribosomal RNA precursors, mRNA precursors and many functional non-coding RNAs, and small RNAs, such as 5S rRNA and tRNAs, respectively. Pol II is the central component of the basal RNA polymerase II transcription machinery. Pols are composed of mobile elements that move relative to each other. In Pol II, RPB5 is part of the lower jaw surrounding the central large cleft and thought to grab the incoming DNA template. Seems to be the major component in this process. The sequence is that of DNA-directed RNA polymerases I, II, and III subunit rpabc1 (polr2e) from Dictyostelium discoideum (Social amoeba).